Consider the following 85-residue polypeptide: Conotoxin Lt28.5 (85 aa).

Positions 1–21 (MPKLEMMLLVLLILPLCYIDA) are cleaved as a signal peptide. Positions 22 to 40 (VGPPPPWNMEDEIIEHWQK) are excised as a propeptide.

This sequence belongs to the conotoxin D superfamily. Post-translationally, contains 5 disulfide bonds. In terms of tissue distribution, expressed by the venom duct.

It localises to the secreted. Functionally, probable neurotoxin. The sequence is that of Conotoxin Lt28.5 from Conus litteratus (Lettered cone).